Consider the following 1058-residue polypeptide: Structural maintenance of chromosomes protein 6A (1058 aa).

Positions I23 to K1049 constitute a Zinc-hook domain. Residue G50 to S57 coordinates ATP. Positions K136 to K449 form a coiled coil. The interval V450 to L633 is flexible hinge. Positions C634 to L927 form a coiled coil.

This sequence belongs to the SMC family. SMC6 subfamily. Forms a heterodimer with SMC5. The SMC5-SMC6 complex is composed of the SMC5 and SMC6 heterodimer attached via their hinge domain and from the non-SMC subunit NSE4A or NSE4B. In terms of tissue distribution, expressed in seedlings, rosette leaves and floral buds.

The protein localises to the nucleus. It localises to the chromosome. Its function is as follows. Core component of the SMC5-SMC6 complex that promotes sister chromatid alignment after DNA damage and facilitates double-stranded DNA breaks (DSBs) repair via homologous recombination between sister chromatids. In Arabidopsis thaliana (Mouse-ear cress), this protein is Structural maintenance of chromosomes protein 6A (SMC6A).